A 199-amino-acid chain; its full sequence is Charged multivesicular body protein 1b (199 aa).

Coiled-coil stretches lie at residues 10–30 (NLKFAAKELQRNSKKCDKEEK) and 178–199 (TSVASAEQDELSQRLAKLRDQV). A disordered region spans residues 167 to 199 (ELPQGQTGSVGTSVASAEQDELSQRLAKLRDQV). A compositionally biased stretch (polar residues) spans 170 to 182 (QGQTGSVGTSVAS). The short motif at 186–196 (DELSQRLAKLR) is the MIT-interacting motif element.

This sequence belongs to the SNF7 family. As to quaternary structure, probable peripherally associated component of the endosomal sorting required for transport complex III (ESCRT-III).

Its subcellular location is the cytoplasm. The protein localises to the cytosol. It localises to the endosome. The protein resides in the late endosome membrane. Functionally, probable peripherally associated component of the endosomal sorting required for transport complex III (ESCRT-III) which is involved in multivesicular bodies (MVBs) formation and sorting of endosomal cargo proteins into MVBs. MVBs contain intraluminal vesicles (ILVs) that are generated by invagination and scission from the limiting membrane of the endosome and mostly are delivered to lysosomes enabling degradation of membrane proteins, such as stimulated growth factor receptors, lysosomal enzymes and lipids. This chain is Charged multivesicular body protein 1b (chmp1b), found in Danio rerio (Zebrafish).